We begin with the raw amino-acid sequence, 407 residues long: Peptidase T (407 aa).

Histidine 82 lines the Zn(2+) pocket. Aspartate 84 is an active-site residue. Residue aspartate 143 coordinates Zn(2+). The active-site Proton acceptor is the glutamate 177. Residues glutamate 178, aspartate 200, and histidine 382 each contribute to the Zn(2+) site.

The protein belongs to the peptidase M20B family. Zn(2+) is required as a cofactor.

It localises to the cytoplasm. The catalysed reaction is Release of the N-terminal residue from a tripeptide.. Cleaves the N-terminal amino acid of tripeptides. The sequence is that of Peptidase T from Streptococcus pyogenes serotype M12 (strain MGAS2096).